The sequence spans 231 residues: Elongation factor 1-delta (231 aa).

Residues 75-136 are disordered; that stretch reads SGVTVEGNAP…AAAAAAKPAK (62 aa). Residues 101 to 117 are compositionally biased toward acidic residues; that stretch reads ADDDDDDDVDLFGEETE. The span at 118–127 shows a compositional bias: basic and acidic residues; it reads EEKKAAEERA.

It belongs to the EF-1-beta/EF-1-delta family. As to quaternary structure, EF-1 is composed of 4 subunits: alpha, beta (1B-alpha=beta'), delta (1B-beta), and gamma (1B-gamma).

Functionally, EF-1-beta and EF-1-beta' stimulate the exchange of GDP bound to EF-1-alpha to GTP. The protein is Elongation factor 1-delta of Beta vulgaris (Sugar beet).